The sequence spans 652 residues: Set1 complex component ash2 (652 aa).

Residues 1–32 form a disordered region; it reads MLAHGSNDYGVSLKGNKTGSSPSKASSLNWNE. Residues 15–32 show a composition bias toward polar residues; that stretch reads GNKTGSSPSKASSLNWNE. Residues 40 to 94 form a PHD-type zinc finger; sequence NTYCYCGKDRNLRFPDLQCSVCLNMFHLSCLSPPCTSMMGFSTNYQFVCKHCTED. The Zn(2+) site is built by C43, C45, C58, C61, H66, C69, C88, and C91. The segment at 234–270 is disordered; the sequence is RLVETETPPPSSSKLKEDYKDSKREMKRSNTPWSNAS. The segment covering 247 to 261 has biased composition (basic and acidic residues); sequence KLKEDYKDSKREMKR. Residues 330–519 form the B30.2/SPRY domain; it reads EAAKDLPNVM…KHNRYIDLPY (190 aa).

The protein belongs to the cclA family. Component of the Set1 complex composed of ash2, sdc1, set1, shg1, spp1, swd1, swd2 and swd3. Component of the Lid2 complex composed of ash2, jmj3, lid2, sdc1 and snt2.

It is found in the nucleus. In terms of biological role, component of the COMPASS (Set1C) complex that specifically mono-, di- and trimethylates histone H3 to form H3K4me1/2/3, which subsequently plays a role in telomere length maintenance and transcription elongation regulation. Regulates MAPK pathway and sporulation through H3K4 methylation. The chain is Set1 complex component ash2 from Schizosaccharomyces pombe (strain 972 / ATCC 24843) (Fission yeast).